Reading from the N-terminus, the 83-residue chain is Cytochrome b559 subunit alpha (83 aa).

The chain crosses the membrane as a helical span at residues 21 to 35 (VIHSITIPSLFIAGW). His23 is a binding site for heme.

The protein belongs to the PsbE/PsbF family. Heterodimer of an alpha subunit and a beta subunit. PSII is composed of 1 copy each of membrane proteins PsbA, PsbB, PsbC, PsbD, PsbE, PsbF, PsbH, PsbI, PsbJ, PsbK, PsbL, PsbM, PsbT, PsbX, PsbY, PsbZ, Psb30/Ycf12, at least 3 peripheral proteins of the oxygen-evolving complex and a large number of cofactors. It forms dimeric complexes. Requires heme b as cofactor.

It localises to the plastid. Its subcellular location is the chloroplast thylakoid membrane. Its function is as follows. This b-type cytochrome is tightly associated with the reaction center of photosystem II (PSII). PSII is a light-driven water:plastoquinone oxidoreductase that uses light energy to abstract electrons from H(2)O, generating O(2) and a proton gradient subsequently used for ATP formation. It consists of a core antenna complex that captures photons, and an electron transfer chain that converts photonic excitation into a charge separation. The chain is Cytochrome b559 subunit alpha from Amborella trichopoda.